The sequence spans 187 residues: Oleosin Zm-II (187 aa).

Alanine 2 is subject to N-acetylalanine. Residues 2–51 (ADRDRSGIYGGAHATYGQQQQQGGGGRPMGEQVKKGMLHDKGPTASQALT) form a polar region. Residues 17-42 (YGQQQQQGGGGRPMGEQVKKGMLHDK) are disordered. A compositionally biased stretch (basic and acidic residues) spans 33–42 (QVKKGMLHDK). The next 3 helical transmembrane spans lie at 50–70 (LTVA…GLAL), 83–103 (VFLI…TAVM), and 104–124 (GFLT…CLAN). The segment at 52–123 (VATLFPLGGL…GGLSSLTCLA (72 aa)) is hydrophobic. Residues 155 to 169 (TAQAGQAIQGRAQEA) are compositionally biased toward low complexity. The segment at 155 to 187 (TAQAGQAIQGRAQEAGTGGGAGAGAGGGGRASS) is disordered. Gly residues predominate over residues 170–187 (GTGGGAGAGAGGGGRASS).

Belongs to the oleosin family. The N-terminus is blocked. Found in embryonic axis, scutellum, and aleurone layer.

Its subcellular location is the lipid droplet. It localises to the membrane. May have a structural role to stabilize the lipid body during desiccation of the seed by preventing coalescence of the oil. Probably interacts with both lipid and phospholipid moieties of lipid bodies. May also provide recognition signals for specific lipase anchorage in lipolysis during seedling growth. The protein is Oleosin Zm-II (OLE18) of Zea mays (Maize).